The following is a 535-amino-acid chain: Large neutral amino acids transporter small subunit 2 (535 aa).

Over residues 1-10 (MEKGARHRHN) the composition is skewed to basic residues. The tract at residues 1–30 (MEKGARHRHNTDKNHAGGSESEDFPEASSG) is disordered. The Cytoplasmic segment spans residues 1–44 (MEKGARHRHNTDKNHAGGSESEDFPEASSGGGGVALKKEIGLVS). A phosphoserine mark is found at serine 19, serine 28, and serine 29. Residues 45 to 65 (ACGIIVGNIIGSGIFVSPKGV) form a helical membrane-spanning segment. Residue isoleucine 53 coordinates L-leucine. The Extracellular portion of the chain corresponds to 66–73 (LENAGSVG). The chain crosses the membrane as a helical span at residues 74–95 (LAVIVWIVTGLITAVGALCYAE). Topologically, residues 96–116 (LGVTIPKSGGDYSYVKDIFGG) are cytoplasmic. Residues 117–149 (LAGFLRLWIAVLVIYPTNQAVIALTFSNYVLQP) form a helical membrane-spanning segment. Asparagine 134 is a binding site for L-tryptophan. Residues 150 to 157 (LFPTCFPP) lie on the Extracellular side of the membrane. Residues 158-178 (DSGLRLLAAICLLLLTWVNCS) traverse the membrane as a helical segment. Residues 179-181 (SVR) are Cytoplasmic-facing. Residues 182–210 (WATRVQDIFTAGKLLALALIIIMGVVQIC) traverse the membrane as a helical segment. Residues 211–230 (KGEYFWLEPKNAFDNFQEPD) are Extracellular-facing. Residues 231–252 (IGLIALAFLQGSFAYGGWNFLN) form a helical membrane-spanning segment. L-leucine is bound at residue glycine 246. Topologically, residues 253–265 (YVTEELVDPYKNL) are cytoplasmic. Residues 266-287 (PRAIFISIPLVTFVYVFANVAY) form a helical membrane-spanning segment. The Extracellular segment spans residues 288–312 (ITAMSPQELLASNAVAVTFGEKLLG). Residues 313–338 (VMAWIMPISVALSTFGGVNGSLFTSS) traverse the membrane as a helical segment. Over 339–364 (RLFFAGAREGHLPSVLAMIHVKRCTP) the chain is Cytoplasmic. A helical membrane pass occupies residues 365–382 (IPALLFTCLSTLLMLVTS). Topologically, residues 383 to 386 (DMYT) are extracellular. The chain crosses the membrane as a helical span at residues 387–408 (LINYVGFINYLFYGVTVAGQIV). Residue asparagine 395 participates in L-tryptophan binding. The Cytoplasmic segment spans residues 409–423 (LRWKKPDIPRPIKIN). 2 helical membrane-spanning segments follow: residues 424–446 (LLFP…WSEP) and 447–466 (VVCG…YFLG). Residues 467–535 (VYWQHKPKCF…DKDSLEQSQP (69 aa)) are Cytoplasmic-facing. The interval 500 to 535 (GGSGTEGTREDMEEQQQPICQPSPGKDKDSLEQSQP) is disordered. The span at 524–535 (GKDKDSLEQSQP) shows a compositional bias: basic and acidic residues. Serine 529 is modified (phosphoserine).

Belongs to the amino acid-polyamine-organocation (APC) superfamily. L-type amino acid transporter (LAT) (TC 2.A.3.8) family. In terms of assembly, disulfide-linked heterodimer composed of the catalytic light chain subunit SLC7A8 and the heavy chain subunit SLC3A2. SLC3A2 acts as a chaperone for correct plasma membrane trafficking and stabilization of SLC7A8 and modulates the substrate affinity and specificity of SLC7A8. ICAM-1 associates with the heterodimer SLC3A2/SLC7A8; facilitates leucine uptake. As to expression, mainly expressed in kidney and small intestine.

Its subcellular location is the cell membrane. The protein resides in the basolateral cell membrane. The catalysed reaction is L-histidine(in) + L-phenylalanine(out) = L-histidine(out) + L-phenylalanine(in). It catalyses the reaction L-tryptophan(in) + L-phenylalanine(out) = L-tryptophan(out) + L-phenylalanine(in). The enzyme catalyses L-isoleucine(in) + L-phenylalanine(out) = L-isoleucine(out) + L-phenylalanine(in). It carries out the reaction L-valine(in) + L-phenylalanine(out) = L-valine(out) + L-phenylalanine(in). The catalysed reaction is L-leucine(in) + L-phenylalanine(out) = L-leucine(out) + L-phenylalanine(in). It catalyses the reaction L-glutamine(in) + L-phenylalanine(out) = L-glutamine(out) + L-phenylalanine(in). The enzyme catalyses L-cysteine(in) + L-phenylalanine(out) = L-cysteine(out) + L-phenylalanine(in). It carries out the reaction L-phenylalanine(out) + L-methionine(in) = L-phenylalanine(in) + L-methionine(out). The catalysed reaction is L-leucine(out) + L-methionine(in) = L-leucine(in) + L-methionine(out). It catalyses the reaction L-cysteine(out) + L-methionine(in) = L-cysteine(in) + L-methionine(out). The enzyme catalyses S-methylmercury-L-cysteine(out) + L-methionine(in) = S-methylmercury-L-cysteine(in) + L-methionine(out). It carries out the reaction S-methylmercury-L-cysteine(in) + L-leucine(out) = S-methylmercury-L-cysteine(out) + L-leucine(in). The catalysed reaction is S-methylmercury-L-cysteine(in) + L-phenylalanine(out) = S-methylmercury-L-cysteine(out) + L-phenylalanine(in). It catalyses the reaction L-phenylalanine(out) + L-serine(in) = L-phenylalanine(in) + L-serine(out). The enzyme catalyses L-phenylalanine(out) + glycine(in) = L-phenylalanine(in) + glycine(out). It carries out the reaction L-phenylalanine(out) + L-alanine(in) = L-phenylalanine(in) + L-alanine(out). The catalysed reaction is 3,3',5-triiodo-L-thyronine(out) = 3,3',5-triiodo-L-thyronine(in). It catalyses the reaction 3,3'-diiodo-L-thyronine(out) = 3,3'-diiodo-L-thyronine(in). The enzyme catalyses L-dopa(out) + L-phenylalanine(in) = L-dopa(in) + L-phenylalanine(out). With respect to regulation, the transporter activity is inhibited by 2-aminobicyclo-(2,2,1)heptane-2-carboxylic acid (BCH) (a specific inhibitor of system L transport). Functionally, associates with SLC3A2 to form a functional heterodimeric complex that translocates small and large neutral amino acids with broad specificity and a stoichiometry of 1:1. Functions as amino acid antiporter mediating the influx of extracellular essential amino acids mainly in exchange with the efflux of highly concentrated intracellular amino acids. Has relatively symmetrical selectivities but strongly asymmetrical substrate affinities at both the intracellular and extracellular sides of the transporter. This asymmetry allows SLC7A8 to regulate intracellular amino acid pools (mM concentrations) by exchange with external amino acids (uM concentration range), equilibrating the relative concentrations of different amino acids across the plasma membrane instead of mediating their net uptake. May play an essential role in the reabsorption of neutral amino acids from the epithelial cells to the bloodstream in the kidney. Involved in the uptake of methylmercury (MeHg) when administered as the L-cysteine or D,L-homocysteine complexes, and hence plays a role in metal ion homeostasis and toxicity. Involved in the cellular activity of small molecular weight nitrosothiols, via the stereoselective transport of L-nitrosocysteine (L-CNSO) across the transmembrane. Imports the thyroid hormone diiodothyronine (T2) and to a smaller extent triiodothyronine (T3) but not rT 3 or thyroxine (T4). Mediates the uptake of L-DOPA. May participate in auditory function. The chain is Large neutral amino acids transporter small subunit 2 from Oryctolagus cuniculus (Rabbit).